The following is a 130-amino-acid chain: uncharacterized protein (130 aa).

A signal peptide spans 1–26 (MINNFKGILIIILSFLFLLLFKYSNA). The N-linked (GlcNAc...) asparagine glycan is linked to asparagine 58.

The protein belongs to the Dictyostelium gerABC family.

It is found in the secreted. This is an uncharacterized protein from Dictyostelium discoideum (Social amoeba).